Consider the following 267-residue polypeptide: Very long chain fatty acid elongase 6 (267 aa).

N-linked (GlcNAc...) asparagine glycosylation is present at asparagine 2. The next 7 helical transmembrane spans lie at 34–51 (FLFSALYAAFIFGGRHLM), 70–90 (LAVFSIFGALRTGAYMLYILM), 111–131 (FWAYAFVLSKAPELGDTIFII), 136–156 (KLIFLHWYHHITVLLYSWYSY), 159–179 (MVAGGGWFMTMNYGVHAVMYS), 197–217 (FITLSQITQMLMGCVINYLVF), and 234–254 (IFWSSLMYLSYLLLFCHFFFE).

The protein belongs to the ELO family. ELOVL6 subfamily. In terms of processing, N-Glycosylated. Expressed in liver and barely in brain.

The protein localises to the endoplasmic reticulum membrane. The catalysed reaction is a very-long-chain acyl-CoA + malonyl-CoA + H(+) = a very-long-chain 3-oxoacyl-CoA + CO2 + CoA. It catalyses the reaction hexadecanoyl-CoA + malonyl-CoA + H(+) = 3-oxooctadecanoyl-CoA + CO2 + CoA. It carries out the reaction (9Z)-hexadecenoyl-CoA + malonyl-CoA + H(+) = 3-oxo-(11Z)-octadecenoyl-CoA + CO2 + CoA. The enzyme catalyses dodecanoyl-CoA + malonyl-CoA + H(+) = 3-oxotetradecanoyl-CoA + CO2 + CoA. The catalysed reaction is tetradecanoyl-CoA + malonyl-CoA + H(+) = 3-oxohexadecanoyl-CoA + CO2 + CoA. It catalyses the reaction (9Z)-octadecenoyl-CoA + malonyl-CoA + H(+) = 3-oxo-(11Z)-eicosenoyl-CoA + CO2 + CoA. It carries out the reaction (9Z,12Z)-octadecadienoyl-CoA + malonyl-CoA + H(+) = (11Z,14Z)-3-oxoicosa-11,14-dienoyl-CoA + CO2 + CoA. The enzyme catalyses (9Z,12Z,15Z)-octadecatrienoyl-CoA + malonyl-CoA + H(+) = (11Z,14Z,17Z)-3-oxoeicosatrienoyl-CoA + CO2 + CoA. Its pathway is lipid metabolism; fatty acid biosynthesis. Its activity is regulated as follows. The reaction is stimulated by the presence of HSD17B12, the enzyme catalyzing the second step of the elongation cycle. Its function is as follows. Catalyzes the first and rate-limiting reaction of the four reactions that constitute the long-chain fatty acids elongation cycle. This endoplasmic reticulum-bound enzymatic process allows the addition of 2 carbons to the chain of long- and very long-chain fatty acids (VLCFAs) per cycle. Condensing enzyme that elongates fatty acids with 12, 14 and 16 carbons with higher activity toward C16:0 acyl-CoAs. Catalyzes the synthesis of unsaturated C16 long chain fatty acids and, to a lesser extent, C18:0 and those with low desaturation degree. May participate in the production of saturated and monounsaturated VLCFAs of different chain lengths that are involved in multiple biological processes as precursors of membrane lipids and lipid mediators. The sequence is that of Very long chain fatty acid elongase 6 from Rattus norvegicus (Rat).